The following is a 360-amino-acid chain: Chorismate synthase (360 aa).

Residue Arg-47 coordinates NADP(+). Residues 124–126 (RSS), 240–241 (NA), Gly-285, 300–304 (KPVAT), and Arg-326 each bind FMN.

Belongs to the chorismate synthase family. Homotetramer. Requires FMNH2 as cofactor.

The catalysed reaction is 5-O-(1-carboxyvinyl)-3-phosphoshikimate = chorismate + phosphate. The protein operates within metabolic intermediate biosynthesis; chorismate biosynthesis; chorismate from D-erythrose 4-phosphate and phosphoenolpyruvate: step 7/7. Functionally, catalyzes the anti-1,4-elimination of the C-3 phosphate and the C-6 proR hydrogen from 5-enolpyruvylshikimate-3-phosphate (EPSP) to yield chorismate, which is the branch point compound that serves as the starting substrate for the three terminal pathways of aromatic amino acid biosynthesis. This reaction introduces a second double bond into the aromatic ring system. This chain is Chorismate synthase, found in Cytophaga hutchinsonii (strain ATCC 33406 / DSM 1761 / CIP 103989 / NBRC 15051 / NCIMB 9469 / D465).